The chain runs to 541 residues: MLQLARFYSLARTKAIHSHGAPFRPEYALKCGLEIHTQLNTKNKLFSQSTNSATSLVDAPNHHTSYYDIALPGTQPVLNLEAILFAMKLSLALGSQVNSISQFDRKHYFYGDQPQGYQLTQHYRPFARGGKINLSKELDDIDESAKEIGILQLQIEQDTGKSHYTETDKDVITLVDLNRSNVPLIELVTKPDFSDIKQVRAFIKKYQNLVRHLHISSGDLETGAMRVDVNLSINEYARVELKNLPNTSSIINAIKYEYQRQVELISVGDTSSLMEPETRGWTGSSTVKLRSKETTIDYRYMPDPELPYINLAPDVISGVRGLMPQLPDDIMRILMKKPYQLSLKDAKILTYNSNQNDMYNHEALRSYYLDTFREFSKLAGERSNAKLPTNWIIHEFLGDLNKLQIPLAKAKEILPPPVFAQFLKLLHEEVISATSGKMLLFHILESFKQSNCQDLSIPDFSKLIEKFELHAINQVDPQELMDLCNDVIAQHTDDTFIRNLVTGKKKSSLKFLIGQGMRRSQGRIKANEFEKKFKEILNIQW.

It belongs to the GatB/GatE family. GatB subfamily. In terms of assembly, subunit of the heterotrimeric GatFAB amidotransferase (AdT) complex, composed of A, B and F subunits.

It localises to the mitochondrion. The catalysed reaction is L-glutamyl-tRNA(Gln) + L-glutamine + ATP + H2O = L-glutaminyl-tRNA(Gln) + L-glutamate + ADP + phosphate + H(+). In terms of biological role, allows the formation of correctly charged Gln-tRNA(Gln) through the transamidation of misacylated Glu-tRNA(Gln) in the mitochondria. The reaction takes place in the presence of glutamine and ATP through an activated gamma-phospho-Glu-tRNA(Gln). The protein is Glutamyl-tRNA(Gln) amidotransferase subunit B, mitochondrial of Saccharomyces cerevisiae (strain YJM789) (Baker's yeast).